A 347-amino-acid polypeptide reads, in one-letter code: Iron-sulfur cluster assembly protein SufC (347 aa).

In terms of domain architecture, ABC transporter spans Leu100–Lys346. Gly134–Ser141 contributes to the ATP binding site.

This sequence belongs to the ABC transporter superfamily. Ycf16 family. As to quaternary structure, component of a complex composed of SufB, SufC and SufD in a stoichiometric ratio of 1:2:1. Interacts with SufB. Interacts with SufD; the interaction enhances the ATPase activity of SufC. Post-translationally, proteolytically cleaved.

The protein resides in the plastid. It is found in the apicoplast. The catalysed reaction is ATP + H2O = ADP + phosphate + H(+). Its pathway is cofactor biosynthesis; iron-sulfur cluster biosynthesis. Functionally, participates in the sulfur mobilization (SUF) pathway for iron-sulfur (Fe-S) cluster biogenesis. As part of a complex consisting of SufB-SufC(2)-SufD, involved in assembly of [4Fe-4S] clusters. Exhibits ATPase activity. This chain is Iron-sulfur cluster assembly protein SufC, found in Plasmodium falciparum (isolate 3D7).